Consider the following 185-residue polypeptide: Probable host range protein 2 (185 aa).

It belongs to the poxviridae C7 protein family.

Functionally, plays a role for multiplication of the virus in different cell types. This Swinepox virus (strain Kasza) (SWPV) protein is Probable host range protein 2.